The following is a 107-amino-acid chain: Metallothionein-1 (107 aa).

The propeptide occupies 1–2 (MD).

It belongs to the metallothionein superfamily. Type 7 family.

The metallothioneins are involved in the cellular sequestration of toxic metal ions. Binds 12 cadmium ions per molecule. This is Metallothionein-1 from Tetrahymena pigmentosa.